The following is a 362-amino-acid chain: Type-1 angiotensin II receptor A (362 aa).

Topologically, residues 1–26 (MSNASTVETSDVERIAVNCSKSGMHN) are extracellular. N-linked (GlcNAc...) asparagine glycans are attached at residues asparagine 3 and asparagine 18. Disulfide bonds link cysteine 19/cysteine 273 and cysteine 102/cysteine 181. The chain crosses the membrane as a helical span at residues 27 to 56 (YIFIAIPIIYSTIFVVGVFGNSMVVIVIYS). Residues 57-62 (YMKMKT) lie on the Cytoplasmic side of the membrane. A helical membrane pass occupies residues 63 to 90 (VASIFLMNLALSDLCFVITLPLWAAYTA). Over 91-99 (MHYHWPFGN) the chain is Extracellular. Residues 100-126 (FLCKVASTAITLNLYTTVFLLTCLSID) form a helical membrane-spanning segment. The Cytoplasmic portion of the chain corresponds to 127-142 (RYSAIVHPMKSRIWRT). The chain crosses the membrane as a helical span at residues 143–166 (AMVARLTCVGIWLVAFLASMPSII). The Extracellular portion of the chain corresponds to 167 to 191 (YRQIYLFHDTNQTVCAIVYDSGHIY). Arginine 168 is an angiotensin II binding site. N-linked (GlcNAc...) asparagine glycosylation is present at asparagine 177. The angiotensin II site is built by tyrosine 185 and lysine 200. The helical transmembrane segment at 192–217 (FMVGMSLAKNIVGFLIPFLIILTSYT) threads the bilayer. Over 218–238 (LIGKTLKEVYRAQRARNDDIF) the chain is Cytoplasmic. The helical transmembrane segment at 239–267 (KMIVAVVLLFFFCWIPYQVFTFLDVLIQM) threads the bilayer. The Extracellular portion of the chain corresponds to 268–277 (DVIQNCKMYD). A helical membrane pass occupies residues 278–303 (IVDTGMPITICIAYFNSCLNPFLYGF). Residues 304-362 (FGKNFRKHFLQLIKYIPPKMRTHASVNTKSSLVSSSLSDTKRASKKIALQMTDNEEHCK) lie on the Cytoplasmic side of the membrane. Cysteine 361 carries the S-palmitoyl cysteine lipid modification.

It belongs to the G-protein coupled receptor 1 family. In terms of processing, C-terminal Ser or Thr residues may be phosphorylated. As to expression, expressed in lung, liver, kidney, and spleen, with highest expression in the heart.

It is found in the cell membrane. Receptor for angiotensin II, a vasoconstricting peptide, which acts as a key regulator of blood pressure and sodium retention by the kidney. The activated receptor in turn couples to G-alpha proteins G(q) (GNAQ, GNA11, GNA14 or GNA15) and thus activates phospholipase C and increases the cytosolic Ca(2+) concentrations, which in turn triggers cellular responses such as stimulation of protein kinase C. The chain is Type-1 angiotensin II receptor A (agtr1-a) from Xenopus laevis (African clawed frog).